The following is a 105-amino-acid chain: Heat shock protein HspQ (105 aa).

The segment at 74-105 (SSETQDEHPEQPSMDELARTIRKQLQAPRLRN) is disordered.

It belongs to the HspQ family.

The protein localises to the cytoplasm. In terms of biological role, involved in the degradation of certain denaturated proteins, including DnaA, during heat shock stress. The chain is Heat shock protein HspQ from Citrobacter koseri (strain ATCC BAA-895 / CDC 4225-83 / SGSC4696).